We begin with the raw amino-acid sequence, 192 residues long: Spermatogenesis-associated protein 3 (192 aa).

Residues 1–15 show a composition bias toward basic residues; that stretch reads MKKVKKKRSEARRHR. Disordered regions lie at residues 1–65 and 161–184; these read MKKV…TTSR and SRKPSSHRNACPPSPRNCGCGSGG. Low complexity predominate over residues 19–59; the sequence is SQHASSNSTSQQPSPESTPQQPSPESTPQQPSPESTPQHSS.

The protein localises to the cell projection. The protein resides in the cilium. Its subcellular location is the flagellum. This Homo sapiens (Human) protein is Spermatogenesis-associated protein 3 (SPATA3).